The primary structure comprises 329 residues: NAC domain-containing protein 79 (329 aa).

In terms of domain architecture, NAC spans leucine 17–lysine 167. The DNA-binding element occupies valine 114 to lysine 173.

Expressed at low levels in leaves.

Its subcellular location is the nucleus. The sequence is that of NAC domain-containing protein 79 from Arabidopsis thaliana (Mouse-ear cress).